Reading from the N-terminus, the 93-residue chain is MDGIKYAVVTDKSIRLLLKNQYTSNVESGSTRTEIKHWVELFFGVKVIAMNSHRLPGKGRRMRPIMGHTMHYRRMIITLQPGYSIPPLRKKRT.

It belongs to the universal ribosomal protein uL23 family. As to quaternary structure, part of the 50S ribosomal subunit.

It localises to the plastid. The protein localises to the chloroplast. Binds to 23S rRNA. The chain is Large ribosomal subunit protein uL23cz/uL23cy (rpl23-A) from Populus alba (White poplar).